Reading from the N-terminus, the 113-residue chain is Hydrogenase maturation factor HybF (113 aa).

Positions 2 and 3 each coordinate Ni(2+). The Zn(2+) site is built by Cys-73, Cys-76, Cys-89, and Cys-92.

The protein belongs to the HypA/HybF family. HybF subfamily.

Involved in the maturation of [NiFe] hydrogenases. Required for nickel insertion into the metal center of the hydrogenase. The polypeptide is Hydrogenase maturation factor HybF (Klebsiella pneumoniae).